We begin with the raw amino-acid sequence, 1312 residues long: Kinesin-like protein KIF16B (1312 aa).

In terms of domain architecture, Kinesin motor spans serine 3–isoleucine 358. Glycine 102–serine 109 provides a ligand contact to ATP. Residues glutamate 366–lysine 425 are a coiled coil. At serine 398 the chain carries Phosphoserine. Positions valine 480 to glycine 544 constitute an FHA domain. At threonine 577 the chain carries Phosphothreonine. Phosphoserine occurs at positions 582, 838, 1047, and 1145. 2 coiled-coil regions span residues lysine 835 to histidine 913 and glutamine 941 to isoleucine 1073. Positions aspartate 1177–threonine 1291 constitute a PX domain.

Belongs to the TRAFAC class myosin-kinesin ATPase superfamily. Kinesin family. As to quaternary structure, interacts with PTPN21. Interacts with RAB14.

The protein resides in the cytoplasm. It localises to the cytoskeleton. It is found in the early endosome membrane. The protein localises to the spindle. In terms of biological role, plus end-directed microtubule-dependent motor protein involved in endosome transport and receptor recycling and degradation. Regulates the plus end motility of early endosomes and the balance between recycling and degradation of receptors such as EGF receptor (EGFR) and FGF receptor (FGFR). Regulates the Golgi to endosome transport of FGFR-containing vesicles during early development, a key process for developing basement membrane and epiblast and primitive endoderm lineages during early postimplantation development. The chain is Kinesin-like protein KIF16B (Kif16b) from Mus musculus (Mouse).